We begin with the raw amino-acid sequence, 168 residues long: Dual-action ribosomal maturation protein DarP (168 aa).

The protein belongs to the DarP family.

Its subcellular location is the cytoplasm. Functionally, member of a network of 50S ribosomal subunit biogenesis factors which assembles along the 30S-50S interface, preventing incorrect 23S rRNA structures from forming. Promotes peptidyl transferase center (PTC) maturation. In Neisseria meningitidis serogroup B (strain ATCC BAA-335 / MC58), this protein is Dual-action ribosomal maturation protein DarP.